We begin with the raw amino-acid sequence, 131 residues long: Profilin (131 aa).

It belongs to the profilin family. As to quaternary structure, occurs in many kinds of cells as a complex with monomeric actin in a 1:1 ratio.

The protein localises to the cytoplasm. It localises to the cytoskeleton. Binds to actin and affects the structure of the cytoskeleton. At high concentrations, profilin prevents the polymerization of actin, whereas it enhances it at low concentrations. By binding to PIP2, it inhibits the formation of IP3 and DG. In Litchi chinensis (Lychee), this protein is Profilin.